The sequence spans 2167 residues: SH3 and multiple ankyrin repeat domains protein 1 (2167 aa).

The interval 1–63 (MTHSPATSED…TRGLQGRSMS (63 aa)) is disordered. Residues 17-32 (SECPEGGSESDSSPDG) show a composition bias toward low complexity. Gly residues predominate over residues 33–47 (PGRGPQGTRGRGSGA). Arg43 carries the post-translational modification Omega-N-methylarginine. Residue Tyr186 is modified to Phosphotyrosine. ANK repeat units lie at residues 195–210 (VARLLDKGLDPNYHDS), 212–245 (SGETPLTLAAQTEGSVEVIRTLCLGGAHIDFRAR), 246–278 (DGMTALHKAACARHCLALTALLDLGGSPNYKDR), 279–312 (RGLTPLFHTAMVGGDPRCCELLLYNRAQLGIADE), 313–345 (NGWQEIHQACQRGHSQHLEHLLFYGAEPGAQNA), 346–378 (SGNTALHICALYNKETCARILLYRGANKDVKNN), and 379–395 (NGQTPFQVAVIAGNFEL). Disordered regions lie at residues 413–432 (SPKYAARRRGPPGAGLTVPP) and 453–546 (APGA…SRGR). Positions 453–479 (APGASSSGTPGPTSGPQGQSQPSAPST) are enriched in low complexity. Residues 527 to 542 (PAGGTGGSGGPGGSLG) are compositionally biased toward gly residues. Ser540 is subject to Phosphoserine. Arg544 bears the Omega-N-methylarginine mark. One can recognise an SH3 domain in the interval 554–613 (VPGRSFMAVKSYQAQGEGEISLSKGEKIKVLSIGEGGFWEGQVKGRVGWFPSDCLEEVAN). Ser638, Ser641, Ser671, and Ser791 each carry phosphoserine. The PDZ domain maps to 663-757 (TVLLQKKDSE…TLMVKVVMVT (95 aa)). Residues 841–894 (ISASESPGPGGLASLGKHRPKGFFATESSFDPHHRSQPSYDRPSFLPPGPGLML) are disordered. Ser898 bears the Phosphoserine mark. Disordered stretches follow at residues 917-1233 (SRSL…LDFT), 1245-1294 (RREG…SIDE), 1308-1417 (GGSS…VLRL), 1429-1725 (RAGL…AGVA), 1740-1787 (GQAF…DPVT), 1842-1866 (KLLPWEEGPGPPPPPLPGPLSQPQA), 1898-1988 (PWAR…STRH), and 2002-2029 (RRAPSPSLLPASDHKVSPAPRPSSLPIL). Positions 928–947 (IPPPPTTSPPEPPYSTPPAP) are enriched in pro residues. Arg958 carries the omega-N-methylarginine modification. The segment covering 964–980 (PSSGGPLPASSPSSFDG) has biased composition (low complexity). Residues 1004–1028 (AHHHPPHHHHHHAPPPQPHHHHAHP) are compositionally biased toward basic residues. Arg1059 is modified (omega-N-methylarginine). Over residues 1064–1085 (SPTSGAPSPSHHSSSGGSSGPT) the composition is skewed to low complexity. Arg1098 and Arg1109 each carry omega-N-methylarginine. Low complexity-rich tracts occupy residues 1132 to 1146 (SIPSASSPTSPALPR) and 1171 to 1184 (STSSSGRSSQGSST). The segment covering 1203-1224 (SPAPATSPVPPSPSPVPTPASP) has biased composition (pro residues). Residues 1245–1256 (RREGGWQNEARR) are compositionally biased toward basic and acidic residues. Arg1257 carries the asymmetric dimethylarginine modification. Ser1291 carries the post-translational modification Phosphoserine. Residues 1363–1372 (ARERALKESS) show a composition bias toward basic and acidic residues. A compositionally biased stretch (pro residues) spans 1378 to 1395 (PQPPPRPPSPRYDAPPPT). The segment covering 1396–1408 (LHHHSPHSPHSPH) has biased composition (basic residues). The residue at position 1429 (Arg1429) is an Omega-N-methylarginine. Ser1442 is modified (phosphoserine). 2 stretches are compositionally biased toward low complexity: residues 1459-1469 (PGVGPLLLQLG) and 1530-1541 (RRVLPTSPTSPR). Over residues 1589–1615 (PLTPGPPHPLPDPPSPATPLPAAPPPA) the composition is skewed to pro residues. Positions 1624-1641 (DSTASSLTSYDSEVATLT) are enriched in polar residues. The segment covering 1648-1676 (PGDPPAPGPPAPAAPAPPAPQPGPDPPPG) has biased composition (pro residues). Residues 1684–1694 (VDSRSSSDHPL) are compositionally biased toward basic and acidic residues. Residues 1695–1708 (ETISSASTLSSLSA) are compositionally biased toward low complexity. The span at 1709–1724 (EGGGNTGGVAGGGAGV) shows a compositional bias: gly residues. The segment covering 1850–1861 (PGPPPPPLPGPL) has biased composition (pro residues). Position 1901 is an omega-N-methylarginine (Arg1901). 3 stretches are compositionally biased toward low complexity: residues 1934-1945 (SQTSLLSKPSSS), 1960-1985 (TGSGVSSSTAAAPGATSPSASSASAS), and 2002-2012 (RRAPSPSLLPA). Arg2022, Arg2042, and Arg2080 each carry omega-N-methylarginine. One can recognise an SAM domain in the interval 2104–2167 (WTKFDVADWL…DRALKFFLER (64 aa)).

The protein belongs to the SHANK family. As to quaternary structure, may homomultimerize via its SAM domain. Interacts with the C-terminus of SSTR2 via the PDZ domain. Interacts with SHARPIN, SPTAN1 and DLGAP1/GKAP. Part of a complex with DLG4/PSD-95 and DLGAP1/GKAP. Interacts with BAIAP2. Interacts with IGSF9. Interacts with HOMER1 and HOMER3. As to expression, expressed only in brain (neuropil of cortex, CA1 region hippocampus and molecular layer of cerebellum).

Its subcellular location is the cytoplasm. It is found in the synapse. It localises to the postsynaptic density. In terms of biological role, seems to be an adapter protein in the postsynaptic density (PSD) of excitatory synapses that interconnects receptors of the postsynaptic membrane including NMDA-type and metabotropic glutamate receptors, and the actin-based cytoskeleton. Plays a role in the structural and functional organization of the dendritic spine and synaptic junction. Overexpression promotes maturation of dendritic spines and the enlargement of spine heads via its ability to recruit Homer to postsynaptic sites, and enhances presynaptic function. In Rattus norvegicus (Rat), this protein is SH3 and multiple ankyrin repeat domains protein 1 (Shank1).